Reading from the N-terminus, the 199-residue chain is Recombination protein RecR (199 aa).

Residues 57 to 72 (CSQCHNITDTDPCQIC) form a C4-type zinc finger. Positions 80–176 (TTICVVQESR…KVTRLAHGLP (97 aa)) constitute a Toprim domain.

It belongs to the RecR family.

In terms of biological role, may play a role in DNA repair. It seems to be involved in an RecBC-independent recombinational process of DNA repair. It may act with RecF and RecO. The chain is Recombination protein RecR from Shouchella clausii (strain KSM-K16) (Alkalihalobacillus clausii).